Reading from the N-terminus, the 479-residue chain is Splicing factor ESS-2 homolog (479 aa).

M1 is subject to N-acetylmethionine. Disordered stretches follow at residues 1–38 (MGTP…RSRQ) and 95–152 (GKIS…PSLD). At T3 the chain carries Phosphothreonine. Low complexity predominate over residues 7–19 (SAGALFLSSASAP). A compositionally biased stretch (acidic residues) spans 135–145 (DDGEAGEEEEK). A Glycyl lysine isopeptide (Lys-Gly) (interchain with G-Cter in SUMO2) cross-link involves residue K145. At S295 the chain carries Phosphoserine. Position 389 is a phosphothreonine (T389). Residues S394 and S398 each carry the phosphoserine modification. The disordered stretch occupies residues 415–479 (RALRASYTPS…PARRKASDFF (65 aa)). A compositionally biased stretch (low complexity) spans 433–454 (TPAGGPQTPTSTPAPGSATRTP). Over residues 455–466 (LTQDPASITDNL) the composition is skewed to polar residues.

It belongs to the ESS2 family. In terms of assembly, identified in the spliceosome C complex. Interacts with FRA10AC1. As to expression, in the adult, widely expressed with highest expression in the testis and brain. Also widely expressed in the embryo with highest levels in the anterior pons.

Its subcellular location is the nucleus. In terms of biological role, may be involved in pre-mRNA splicing. This Mus musculus (Mouse) protein is Splicing factor ESS-2 homolog (Ess2).